Here is a 268-residue protein sequence, read N- to C-terminus: Cytochrome c oxidase subunit 3 (268 aa).

A run of 7 helical transmembrane segments spans residues 19–39 (PWPI…VLTM), 49–69 (FDLG…DIVI), 85–105 (LIIG…SVFW), 124–144 (PVGI…IILL), 165–185 (SIIG…FQAF), 202–222 (VFFA…LFLF), and 245–265 (ILYW…VYFW).

Belongs to the cytochrome c oxidase subunit 3 family. As to quaternary structure, component of the cytochrome c oxidase (complex IV, CIV), a multisubunit enzyme composed of a catalytic core of 3 subunits and several supernumerary subunits. The complex exists as a monomer or a dimer and forms supercomplexes (SCs) in the inner mitochondrial membrane with ubiquinol-cytochrome c oxidoreductase (cytochrome b-c1 complex, complex III, CIII).

The protein localises to the mitochondrion inner membrane. The enzyme catalyses 4 Fe(II)-[cytochrome c] + O2 + 8 H(+)(in) = 4 Fe(III)-[cytochrome c] + 2 H2O + 4 H(+)(out). Its function is as follows. Component of the cytochrome c oxidase, the last enzyme in the mitochondrial electron transport chain which drives oxidative phosphorylation. The respiratory chain contains 3 multisubunit complexes succinate dehydrogenase (complex II, CII), ubiquinol-cytochrome c oxidoreductase (cytochrome b-c1 complex, complex III, CIII) and cytochrome c oxidase (complex IV, CIV), that cooperate to transfer electrons derived from NADH and succinate to molecular oxygen, creating an electrochemical gradient over the inner membrane that drives transmembrane transport and the ATP synthase. Cytochrome c oxidase is the component of the respiratory chain that catalyzes the reduction of oxygen to water. Electrons originating from reduced cytochrome c in the intermembrane space (IMS) are transferred via the dinuclear copper A center (CU(A)) of subunit 2 and heme A of subunit 1 to the active site in subunit 1, a binuclear center (BNC) formed by heme A3 and copper B (CU(B)). The BNC reduces molecular oxygen to 2 water molecules using 4 electrons from cytochrome c in the IMS and 4 protons from the mitochondrial matrix. The chain is Cytochrome c oxidase subunit 3 (COIII) from Schizophyllum commune (Split gill fungus).